The following is a 530-amino-acid chain: UPF0422 protein lpg2959 (530 aa).

An N-terminal signal peptide occupies residues 1–19; sequence MKFKKIILALACLSSPLYA. Residues 20–66 are a coiled coil; the sequence is DQDQQLKSEIQRLQHQAEDLQAQLNRLQKQLANHKSSQQKHEQQAAA. A disordered region spans residues 50–81; the sequence is LANHKSSQQKHEQQAAAKPAEPQSKPTVKSGA. Residues 63 to 75 are compositionally biased toward low complexity; it reads QAAAKPAEPQSKP.

This sequence belongs to the UPF0422 family.

This chain is UPF0422 protein lpg2959, found in Legionella pneumophila subsp. pneumophila (strain Philadelphia 1 / ATCC 33152 / DSM 7513).